Consider the following 154-residue polypeptide: Deoxyuridine 5'-triphosphate nucleotidohydrolase (154 aa).

Residues 64-66 (RSG), asparagine 77, 81-83 (TID), and lysine 91 each bind substrate.

The protein belongs to the dUTPase family. Homotrimer. It depends on Mg(2+) as a cofactor.

The enzyme catalyses dUTP + H2O = dUMP + diphosphate + H(+). The protein operates within pyrimidine metabolism; dUMP biosynthesis; dUMP from dCTP (dUTP route): step 2/2. Functionally, this enzyme is involved in nucleotide metabolism: it produces dUMP, the immediate precursor of thymidine nucleotides and it decreases the intracellular concentration of dUTP so that uracil cannot be incorporated into DNA. In Mycobacterium marinum (strain ATCC BAA-535 / M), this protein is Deoxyuridine 5'-triphosphate nucleotidohydrolase.